We begin with the raw amino-acid sequence, 132 residues long: Small ribosomal subunit protein uS8 (132 aa).

This sequence belongs to the universal ribosomal protein uS8 family. In terms of assembly, part of the 30S ribosomal subunit. Contacts proteins S5 and S12.

One of the primary rRNA binding proteins, it binds directly to 16S rRNA central domain where it helps coordinate assembly of the platform of the 30S subunit. The sequence is that of Small ribosomal subunit protein uS8 from Stenotrophomonas maltophilia (strain K279a).